Consider the following 536-residue polypeptide: Chaperonin GroEL 1 (536 aa).

ATP is bound by residues 29-32, 86-90, G413, 476-478, and D492; these read TLGP, DGTTT, and NAA.

This sequence belongs to the chaperonin (HSP60) family. In terms of assembly, forms a cylinder of 14 subunits composed of two heptameric rings stacked back-to-back. Interacts with the co-chaperonin GroES.

It localises to the cytoplasm. It catalyses the reaction ATP + H2O + a folded polypeptide = ADP + phosphate + an unfolded polypeptide.. Functionally, together with its co-chaperonin GroES, plays an essential role in assisting protein folding. The GroEL-GroES system forms a nano-cage that allows encapsulation of the non-native substrate proteins and provides a physical environment optimized to promote and accelerate protein folding. This chain is Chaperonin GroEL 1, found in Nocardia farcinica (strain IFM 10152).